A 417-amino-acid chain; its full sequence is MLKREMNIADYDTELWQAMQQEVTRQEQHIELIASENYTSPRVMQAQGSQLTNKYAEGYPGKRYYGGCQYVDQVEQLAIDRAKALFGADYANVQPHSGSQANFAVYTALLQPGDTVLGMNLAHGGHLTHGSPVNFSGKLYNVVPYGIDAHGRIDYDDLAAQAQRHRPKMIIGGFSAYSGVVDWARMREIANSIGAYLFVDMAHVAGLVAAGVYPNPIPHAHVVTTTTHKTLAGPRGGLILAKGLDETMYKKLNSAVFPGAQGGPLMHVIAAKAVALKEAMEPEFTRYQQQVAKNAKAMVDVFLQRGYKVVSGGTENHLFLLDLVDRQITGKEADAALGHANITVNKNSVPNDPQSPFVTSGIRIGTPAITRRGFKEAESRELAGWMCDVLDNIHDEATIACTKQKVLALCERLPVYA.

(6S)-5,6,7,8-tetrahydrofolate is bound by residues L121 and 125–127 (GHL). K229 bears the N6-(pyridoxal phosphate)lysine mark. 355–357 (SPF) is a binding site for (6S)-5,6,7,8-tetrahydrofolate.

It belongs to the SHMT family. As to quaternary structure, homodimer. Pyridoxal 5'-phosphate is required as a cofactor.

It localises to the cytoplasm. The enzyme catalyses (6R)-5,10-methylene-5,6,7,8-tetrahydrofolate + glycine + H2O = (6S)-5,6,7,8-tetrahydrofolate + L-serine. It functions in the pathway one-carbon metabolism; tetrahydrofolate interconversion. Its pathway is amino-acid biosynthesis; glycine biosynthesis; glycine from L-serine: step 1/1. In terms of biological role, catalyzes the reversible interconversion of serine and glycine with tetrahydrofolate (THF) serving as the one-carbon carrier. This reaction serves as the major source of one-carbon groups required for the biosynthesis of purines, thymidylate, methionine, and other important biomolecules. Also exhibits THF-independent aldolase activity toward beta-hydroxyamino acids, producing glycine and aldehydes, via a retro-aldol mechanism. This chain is Serine hydroxymethyltransferase, found in Edwardsiella ictaluri (strain 93-146).